A 454-amino-acid polypeptide reads, in one-letter code: Uridine kinase (454 aa).

Glycine 28 to threonine 35 lines the ATP pocket.

It belongs to the uridine kinase family.

The protein resides in the cytoplasm. Its subcellular location is the nucleus. The catalysed reaction is uridine + ATP = UMP + ADP + H(+). It catalyses the reaction cytidine + ATP = CMP + ADP + H(+). Its pathway is pyrimidine metabolism; CTP biosynthesis via salvage pathway; CTP from cytidine: step 1/3. The protein operates within pyrimidine metabolism; UMP biosynthesis via salvage pathway; UMP from uridine: step 1/1. Its function is as follows. Catalyzes the conversion of uridine into UMP and cytidine into CMP in the pyrimidine salvage pathway. The polypeptide is Uridine kinase (urk1) (Schizosaccharomyces pombe (strain 972 / ATCC 24843) (Fission yeast)).